Reading from the N-terminus, the 750-residue chain is Photosystem I P700 chlorophyll a apoprotein A1 (750 aa).

Transmembrane regions (helical) follow at residues 70–93 (VFSAHFGQLSIIFLWLSGMYFHGA), 156–179 (LYCTAIGALVFAALMLFAGWFHYH), 195–219 (LNHHLAGLLGLGSLSWAGHQVHVSL), 291–309 (IAHHHLAIAILFLIAGHMY), 346–369 (WHAQLSLNLAMLGSLTIVVAHHMY), 385–411 (LSLFTHHMWIGGFLIVGAAAHAAIFMV), 433–455 (AIISHLNWACIFLGFHSFGLYIH), and 531–549 (FLVHHIHAFTIHVTVLILL). [4Fe-4S] cluster is bound by residues Cys573 and Cys582. A run of 2 helical transmembrane segments spans residues 589 to 610 (HVFLGLFWMYNAISVVIFHFSW) and 664 to 686 (LSAYGLFFLGAHFVWAFSLMFLF). Position 675 (His675) interacts with chlorophyll a'. Positions 683 and 691 each coordinate chlorophyll a. Trp692 lines the phylloquinone pocket. A helical membrane pass occupies residues 724–744 (AVGVTHYLLGGIATTWAFFLA).

The protein belongs to the PsaA/PsaB family. The PsaA/B heterodimer binds the P700 chlorophyll special pair and subsequent electron acceptors. PSI consists of a core antenna complex that captures photons, and an electron transfer chain that converts photonic excitation into a charge separation. The eukaryotic PSI reaction center is composed of at least 11 subunits. The cofactor is P700 is a chlorophyll a/chlorophyll a' dimer, A0 is one or more chlorophyll a, A1 is one or both phylloquinones and FX is a shared 4Fe-4S iron-sulfur center..

It is found in the plastid. Its subcellular location is the chloroplast thylakoid membrane. It catalyses the reaction reduced [plastocyanin] + hnu + oxidized [2Fe-2S]-[ferredoxin] = oxidized [plastocyanin] + reduced [2Fe-2S]-[ferredoxin]. Its function is as follows. PsaA and PsaB bind P700, the primary electron donor of photosystem I (PSI), as well as the electron acceptors A0, A1 and FX. PSI is a plastocyanin-ferredoxin oxidoreductase, converting photonic excitation into a charge separation, which transfers an electron from the donor P700 chlorophyll pair to the spectroscopically characterized acceptors A0, A1, FX, FA and FB in turn. Oxidized P700 is reduced on the lumenal side of the thylakoid membrane by plastocyanin. This chain is Photosystem I P700 chlorophyll a apoprotein A1, found in Aethionema grandiflorum (Persian stone-cress).